We begin with the raw amino-acid sequence, 187 residues long: MESLQNHFLIAMPSLHDTFFERSVIYICEHDAKGAMGLVINKPLGIEVNSLLEQMDLPAEQVSTDLAFNANVMMGGPVSQDRGFVLHTSQPYWANSTDLGCGLMLTTSRDVLTAIGSNRSPEKFLVALGYAGWSKDQLEQELADNSWLTIPATNALLFDIKHEDRWPQASRALGFDAWQVSAQAGHA.

The protein belongs to the UPF0301 (AlgH) family.

The chain is UPF0301 protein Sbal195_3177 from Shewanella baltica (strain OS195).